Reading from the N-terminus, the 154-residue chain is Transcriptional repressor NrdR (154 aa).

A zinc finger lies at 3–34 (CPFCGANDTKVIDSRLVAEGEQVRRRRECVAC). The ATP-cone domain occupies 49–139 (PRLIKQDGTR…VYRRFQDLDE (91 aa)).

This sequence belongs to the NrdR family. Zn(2+) serves as cofactor.

Negatively regulates transcription of bacterial ribonucleotide reductase nrd genes and operons by binding to NrdR-boxes. This Pseudomonas putida (strain W619) protein is Transcriptional repressor NrdR.